Here is a 152-residue protein sequence, read N- to C-terminus: ASP external chaperone (152 aa).

The first 22 residues, 1–22, serve as a signal peptide directing secretion; it reads MNKPVTLLLATLLAPLSGQLCA.

As to quaternary structure, forms a complex with the serine protease ASP in the periplasm. After translocation of the ASP-ORF2 complex from the periplasm to the extracellular space, the complex is dissociated in a pH-dependent manner.

It localises to the periplasm. Its subcellular location is the secreted. Its activity is regulated as follows. Degraded by ASP after secretion and dissociation of the ASP-ORF2 complex. Its function is as follows. Required for the production of the active form of the Aeromonas extracellular serine protease (ASP). Acts as a chaperone that helps ASP form an active structure in the periplasm. Formation of a complex with ASP in the periplasm also inactivates the protease activity and likely protects ASP from intrinsic proteases. Dissociation of the ASP-ORF2 complex after secretion in the extracellular space generates an active ASP. The sequence is that of ASP external chaperone from Aeromonas sobria.